The primary structure comprises 136 residues: MSLTLRVLAPDQNVFDGSADEVILPSTTGQLGILTGHISMLTAIDVGVLRVRANGSWNSIALMGGFAEVDSDEVTVLVNKAELGSSIDANAAEADFQKATTAVAGMEGQPASPEKVKAQQQLNEARARMQASKSAD.

The tract at residues 104–136 is disordered; it reads AGMEGQPASPEKVKAQQQLNEARARMQASKSAD.

Belongs to the ATPase epsilon chain family. In terms of assembly, F-type ATPases have 2 components, CF(1) - the catalytic core - and CF(0) - the membrane proton channel. CF(1) has five subunits: alpha(3), beta(3), gamma(1), delta(1), epsilon(1). CF(0) has three main subunits: a, b and c.

It localises to the cellular thylakoid membrane. Functionally, produces ATP from ADP in the presence of a proton gradient across the membrane. The sequence is that of ATP synthase epsilon chain from Synechococcus sp. (strain CC9902).